A 309-amino-acid polypeptide reads, in one-letter code: Taste receptor type 2 member 66 (309 aa).

Residue methionine 1 is a topological domain, extracellular. Residues 2–22 traverse the membrane as a helical segment; the sequence is ITFLPIIFSILIVVTFVIGNF. The Cytoplasmic portion of the chain corresponds to 23–46; sequence ANGFIALANSIEWFKRQKISFADQ. A helical membrane pass occupies residues 47–67; that stretch reads ILTALAVPRVGLLWVLLLNWY. At 68–86 the chain is on the extracellular side; the sequence is ATELNPAFYSIEVRITAYN. A helical membrane pass occupies residues 87–107; sequence LWAVINHFSNWLATSLSIFYL. Over 108-126 the chain is Cytoplasmic; sequence LKIANFSNLIFLRLKRRVK. A helical membrane pass occupies residues 127–147; sequence SVVLVILLGPLLFLVCHLFVI. The Extracellular portion of the chain corresponds to 148–178; sequence NMNQIIWTKEYEGNMTWKIKLRSAMYLSNTT. Asparagine 161 and asparagine 176 each carry an N-linked (GlcNAc...) asparagine glycan. The chain crosses the membrane as a helical span at residues 179-199; that stretch reads VTILANLVPFTVTLISFLLLV. Over 200–229 the chain is Cytoplasmic; the sequence is CSLCKHLKKMQLHGKGSQDPSTKVHIKALQ. A helical transmembrane segment spans residues 230–250; sequence TVISFLLLCAIYFVSVIISVW. Residues 251-259 lie on the Extracellular side of the membrane; that stretch reads SFKNLENKP. A helical transmembrane segment spans residues 260–280; sequence VFMFCQAIGFSCSSAHPFILI. Topologically, residues 281–309 are cytoplasmic; that stretch reads WGNKKLKQPFLSVLWQMRYWVKGEKPSSS.

Belongs to the G-protein coupled receptor T2R family.

It localises to the membrane. In terms of biological role, receptor that may play a role in the perception of bitterness and is gustducin-linked. May play a role in sensing the chemical composition of the gastrointestinal content. The activity of this receptor may stimulate alpha gustducin, mediate PLC-beta-2 activation and lead to the gating of TRPM5. This Pan paniscus (Pygmy chimpanzee) protein is Taste receptor type 2 member 66 (TAS2R66).